Here is a 1279-residue protein sequence, read N- to C-terminus: Cellulose synthase operon protein C (1279 aa).

Residues M1 to A21 form the signal peptide. 10 TPR repeats span residues Q27–Q60, D62–P94, A218–D250, V306–A339, P384–D417, A460–N493, W495–Q527, P606–P639, A719–N752, and P787–M820.

It functions in the pathway glycan metabolism; bacterial cellulose biosynthesis. Functionally, required for maximal bacterial cellulose synthesis. This Pseudomonas fluorescens (strain SBW25) protein is Cellulose synthase operon protein C (bscS).